The sequence spans 416 residues: Queuine tRNA-ribosyltransferase accessory subunit 2 (416 aa).

Residues Cys-350, Cys-352, Cys-355, and His-381 each contribute to the Zn(2+) site.

This sequence belongs to the queuine tRNA-ribosyltransferase family. QTRT2 subfamily. Heterodimer of a catalytic subunit qtrt1 and an accessory subunit qtrt2. It depends on Zn(2+) as a cofactor.

It is found in the cytoplasm. Its subcellular location is the mitochondrion outer membrane. Its function is as follows. Non-catalytic subunit of the queuine tRNA-ribosyltransferase (TGT) that catalyzes the base-exchange of a guanine (G) residue with queuine (Q) at position 34 (anticodon wobble position) in tRNAs with GU(N) anticodons (tRNA-Asp, -Asn, -His and -Tyr), resulting in the hypermodified nucleoside queuosine (7-(((4,5-cis-dihydroxy-2-cyclopenten-1-yl)amino)methyl)-7-deazaguanosine). In Danio rerio (Zebrafish), this protein is Queuine tRNA-ribosyltransferase accessory subunit 2.